The sequence spans 348 residues: Protein disulfide isomerase CRELD2 (348 aa).

The signal sequence occupies residues 1–22 (MHLPPAAAVGLLLLLLPPPARV). A CXXC motif is present at residues 30–33 (CQRC). Intrachain disulfides connect C30–C33, C139–C153, C147–C165, and C167–C176. The 43-residue stretch at 135-177 (DCQECQGGSQRPCSGNGHCDGDGSRQGDGSCQCHVGYKGPLCI) folds into the EGF-like 1 domain. The stretch at 192–239 (HSFCTACDESCKTCSGPTNKGCVECEVGWTRVEDACVDVDECAAETPP) is one FU 1 repeat. Residue N250 is glycosylated (N-linked (GlcNAc...) asparagine). Residues 252–299 (SYTCEECDSTCVGCTGKGPANCKECISGYSKQKGECADIDECSLETKV) form an FU 2 repeat. The CXXC motif lies at 262–265 (CVGC). Intrachain disulfides connect C262-C265, C293-C307, C300-C316, and C318-C328. Residues 289 to 329 (DIDECSLETKVCKKENENCYNTPGSFVCVCPEGFEEDRRCL) enclose the EGF-like 2; calcium-binding domain.

Belongs to the CRELD family. In terms of assembly, interacts with CHRNA4. Component of a complex containing at least CRELD2, MANF, MATN3 and PDIA4.

Its subcellular location is the endoplasmic reticulum. It catalyses the reaction Catalyzes the rearrangement of -S-S- bonds in proteins.. Functionally, protein disulfide isomerase. Might play a role in the unfolded protein response. May regulate transport of alpha4-beta2 neuronal acetylcholine receptor. This chain is Protein disulfide isomerase CRELD2 (CRELD2), found in Cricetulus griseus (Chinese hamster).